We begin with the raw amino-acid sequence, 517 residues long: Acetylcholine receptor subunit delta (517 aa).

Residues 1–21 (MAGPVPTLGLLAALVVCGSWG) form the signal peptide. At 22–245 (LNEEQRLIQH…VTFYLIIRRK (224 aa)) the chain is on the extracellular side. N-linked (GlcNAc...) asparagine glycosylation is found at Asn-97, Asn-164, and Asn-190. Cys-151 and Cys-165 form a disulfide bridge. The next 3 helical transmembrane spans lie at 246–270 (PLFYIINILVPCVLISFMINLVFYL), 278–296 (TSVAISVLLAQSVFLLLIS), and 312–333 (FLLFGMVLVTMVVVICVIVLNI). Residues 334–471 (HFRTPSTHVL…WNQVARTVDR (138 aa)) lie on the Cytoplasmic side of the membrane. Tyr-390 carries the post-translational modification Phosphotyrosine; by Tyr-kinases. The helical transmembrane segment at 472–490 (LCLFVVTPVMVVGTAWIFL) threads the bilayer.

The protein belongs to the ligand-gated ion channel (TC 1.A.9) family. Acetylcholine receptor (TC 1.A.9.1) subfamily. Delta/CHRND sub-subfamily. In terms of assembly, pentamer of two alpha chains, and one each of the beta, delta, and gamma (in immature muscle) or epsilon (in mature muscle) chains. The muscle heteropentamer composed of alpha-1, beta-1, delta, epsilon subunits interacts with the alpha-conotoxin ImII.

The protein localises to the postsynaptic cell membrane. It is found in the cell membrane. It carries out the reaction K(+)(in) = K(+)(out). The catalysed reaction is Na(+)(in) = Na(+)(out). In terms of biological role, after binding acetylcholine, the AChR responds by an extensive change in conformation that affects all subunits and leads to opening of an ion-conducting channel across the plasma membrane. This Rattus norvegicus (Rat) protein is Acetylcholine receptor subunit delta (Chrnd).